The primary structure comprises 35 residues: Anti-H(O) lectin 3 (35 aa).

It belongs to the leguminous lectin family. In terms of assembly, homodimer. In terms of processing, highly glycosylated.

Binds lactose or galactose. The sequence is that of Anti-H(O) lectin 3 from Ulex europaeus (Furze).